A 494-amino-acid polypeptide reads, in one-letter code: Cytochrome P450 2A8 (494 aa).

C439 is a binding site for heme.

It belongs to the cytochrome P450 family. Heme serves as cofactor. Liver.

It is found in the endoplasmic reticulum membrane. The protein localises to the microsome membrane. It carries out the reaction an organic molecule + reduced [NADPH--hemoprotein reductase] + O2 = an alcohol + oxidized [NADPH--hemoprotein reductase] + H2O + H(+). Functionally, highly active in 7-ethoxycoumarin O-deethylation, and benzphetamine N-demethylation; moderately active in testosterone 7-alpha-hydroxylation, ethylmorphine N-demethylation, p-nitroanisole O-demethylation; and only slightly active in benzopyrene 3-hydroxylation, 7-ethoxyresorufin O-deethylation, testosterone 2-alpha-hydroxylation and testosterone 17-oxidation. Competent in the metabolic activation of aflatoxin B1. The polypeptide is Cytochrome P450 2A8 (CYP2A8) (Mesocricetus auratus (Golden hamster)).